The primary structure comprises 195 residues: Imidazoleglycerol-phosphate dehydratase (195 aa).

It belongs to the imidazoleglycerol-phosphate dehydratase family.

It localises to the cytoplasm. It catalyses the reaction D-erythro-1-(imidazol-4-yl)glycerol 3-phosphate = 3-(imidazol-4-yl)-2-oxopropyl phosphate + H2O. It functions in the pathway amino-acid biosynthesis; L-histidine biosynthesis; L-histidine from 5-phospho-alpha-D-ribose 1-diphosphate: step 6/9. This chain is Imidazoleglycerol-phosphate dehydratase, found in Leuconostoc mesenteroides subsp. mesenteroides (strain ATCC 8293 / DSM 20343 / BCRC 11652 / CCM 1803 / JCM 6124 / NCDO 523 / NBRC 100496 / NCIMB 8023 / NCTC 12954 / NRRL B-1118 / 37Y).